The chain runs to 184 residues: GTP cyclohydrolase 1 (184 aa).

Residues Cys-75, His-78, and Cys-146 each contribute to the Zn(2+) site.

Belongs to the GTP cyclohydrolase I family. Toroid-shaped homodecamer, composed of two pentamers of five dimers.

It catalyses the reaction GTP + H2O = 7,8-dihydroneopterin 3'-triphosphate + formate + H(+). It participates in cofactor biosynthesis; 7,8-dihydroneopterin triphosphate biosynthesis; 7,8-dihydroneopterin triphosphate from GTP: step 1/1. This chain is GTP cyclohydrolase 1, found in Streptococcus pneumoniae serotype 2 (strain D39 / NCTC 7466).